Consider the following 141-residue polypeptide: Sperm-associated microtubule inner protein 10 (141 aa).

The segment covering 1 to 16 (MASEKDDGPALPKLDD) has biased composition (basic and acidic residues). The segment at 1-33 (MASEKDDGPALPKLDDDNQTAENTCKPAEEQPQ) is disordered.

As to quaternary structure, microtubule inner protein component of sperm flagellar doublet microtubules. Expressed predominantly in the testis.

The protein resides in the cytoplasm. It is found in the cytoskeleton. It localises to the flagellum axoneme. Microtubule inner protein (MIP) part of the dynein-decorated doublet microtubules (DMTs) in flagellum axoneme, which is required for flagellum beating. May serve to reinforce and thus stabilize the microtubule structure in the sperm flagella. Involved in the regulation of sperm motility. In Mus musculus (Mouse), this protein is Sperm-associated microtubule inner protein 10 (Spmip10).